The sequence spans 86 residues: Toxin Td1 (86 aa).

The signal sequence occupies residues 1–20 (MIRFILFISCFFLIGMVIEC). One can recognise an LCN-type CS-alpha/beta domain in the interval 21–83 (KDGYLMEPNG…VWERATNRCG (63 aa)). Cystine bridges form between Cys31–Cys82, Cys35–Cys57, Cys43–Cys63, and Cys47–Cys65. Lysine amide is present on Lys84.

As to expression, expressed by the venom gland.

It localises to the secreted. Functionally, beta toxins bind voltage-independently at site-4 of sodium channels (Nav) and shift the voltage of activation toward more negative potentials thereby affecting sodium channel activation and promoting spontaneous and repetitive firing. In Tityus discrepans (Venezuelan scorpion), this protein is Toxin Td1.